The following is a 43-amino-acid chain: Photosystem II reaction center protein Y (43 aa).

Residues leucine 8–isoleucine 26 traverse the membrane as a helical segment.

The protein belongs to the PsbY family. In terms of assembly, PSII is composed of 1 copy each of membrane proteins PsbA, PsbB, PsbC, PsbD, PsbE, PsbF, PsbH, PsbI, PsbJ, PsbK, PsbL, PsbM, PsbT, PsbX, PsbY, PsbZ, Psb30/Ycf12, peripheral proteins PsbO, CyanoQ (PsbQ), PsbU, PsbV and a large number of cofactors. It forms dimeric complexes.

It localises to the cellular thylakoid membrane. In terms of biological role, loosely associated component of the core of photosystem II (PSII), it is not always seen in crystals. PSII is a light-driven water plastoquinone oxidoreductase, using light energy to abstract electrons from H(2)O, generating a proton gradient subsequently used for ATP formation. This chain is Photosystem II reaction center protein Y, found in Parasynechococcus marenigrum (strain WH8102).